We begin with the raw amino-acid sequence, 230 residues long: MKITWLGHSGFRIEIEEAVLLVDPWLSGNPMFPIERRDEAIAGATHILLTHGHGDHSGDAVAIASELGLPIVGIYDLVTWLQSRDGVDGIGFNKGGTVTLDGARVTMVHATHSSSIMGEAGPVYTGTESGYMIAGEGHVIYASGDTDIMADMGWMGEYHRPDIGILAAGGHFTMDMKRAAFAARKYFDFRTVIPCHYRTFPLLEQSAEALRQGLPGVEVLEPEVLEPITI.

It belongs to the UPF0173 family.

The chain is UPF0173 metal-dependent hydrolase Rsph17025_2229 from Cereibacter sphaeroides (strain ATCC 17025 / ATH 2.4.3) (Rhodobacter sphaeroides).